The chain runs to 201 residues: Ribosome maturation factor RimM (201 aa).

The PRC barrel domain occupies 94–168 (EDEYYHADLI…RLVADPPLGL (75 aa)). Positions 164–201 (PPLGLLDDTRPPAGVEGEVEEDPGVGIDEDGDGKGGAS) are disordered. Acidic residues predominate over residues 180 to 194 (GEVEEDPGVGIDEDG).

It belongs to the RimM family. As to quaternary structure, binds ribosomal protein uS19.

Its subcellular location is the cytoplasm. Functionally, an accessory protein needed during the final step in the assembly of 30S ribosomal subunit, possibly for assembly of the head region. Essential for efficient processing of 16S rRNA. May be needed both before and after RbfA during the maturation of 16S rRNA. It has affinity for free ribosomal 30S subunits but not for 70S ribosomes. This Rhodospirillum rubrum (strain ATCC 11170 / ATH 1.1.1 / DSM 467 / LMG 4362 / NCIMB 8255 / S1) protein is Ribosome maturation factor RimM.